We begin with the raw amino-acid sequence, 306 residues long: Serine/threonine-protein phosphatase 2A catalytic subunit A (306 aa).

Residues aspartate 54, histidine 56, aspartate 82, and asparagine 114 each contribute to the Mn(2+) site. Residue histidine 115 is the Proton donor of the active site. 2 residues coordinate Mn(2+): histidine 164 and histidine 238. Leucine 306 is subject to Leucine methyl ester.

This sequence belongs to the PPP phosphatase family. PP-2A subfamily. PP2A consists of a trimeric holoenzyme, composed of a 37 kDa catalytic subunit (C subunit) and a 65 kDa constant regulatory subunit (A subunit), that associates with a variety of regulatory subunits (B subunit) such as phr2AB (B55) and psrA (B56 homolog). The trimer may partially dissociates into a core 'AC' dimer equally active compared to the trimer. The cofactor is Mn(2+). Post-translationally, reversibly methyl esterified on Leu-306 by leucine carboxyl methyltransferase 1 (LCMT) and protein phosphatase methylesterase 1 (PPME1). Carboxyl methylation influences the affinity of the catalytic subunit for the different regulatory subunits, thereby modulating the PP2A holoenzyme's substrate specificity, enzyme activity and cellular localization.

It is found in the cytoplasm. It localises to the cytosol. Its subcellular location is the nucleus speckle. The catalysed reaction is O-phospho-L-seryl-[protein] + H2O = L-seryl-[protein] + phosphate. The enzyme catalyses O-phospho-L-threonyl-[protein] + H2O = L-threonyl-[protein] + phosphate. Plays a role in activating the myosin contractile function. Dephosphorylates threonine at 'Thr-1823', 'Thr-1833' and 'Thr-2029' in the C-terminal tail region of myosin II heavy chain (mhcA). Drives the assembly of dephosphorylated myosin II filaments to allow myosin recruitment into the cytoskeleton. This is Serine/threonine-protein phosphatase 2A catalytic subunit A (pho2a) from Dictyostelium discoideum (Social amoeba).